The primary structure comprises 422 residues: MSRRVVVTGIGVVAPGGIGAARFWDLLAGGRTATRRISLFDPARLRSQIAAECDFDPSAHGLDDETVRRCDRYVQFALVATAEAVRDAGLDTTREDPWRMGAVLGTAVGGTTRLEHDYVLVSEGGSRWDVDHRRAEPHLHRAFAPSTLASTVAETFGAQGPVQTVSTGCTSGLDAVGYAYHAIAEGRADVCLAGASDSPISPITMACFDAIKATSPSNDDPEHASRPFDARRNGFVMGEGGAVLVLEELEHARARGADVYCELAGYATFGNAHHMTGLTREGLEMARAIDTALDMARLDGTDIDYVNAHGSGTQQNDRHETAAVKRSLGEHAYRTPMSSIKSMVGHSLGAIGSIEVVACVLALAHQVVPPTANYETPDPECDLDYVPREARERELRSVLSVGSGFGGFQSAVVLTGPERRLR.

The 415-residue stretch at 2–416 (SRRVVVTGIG…GFQSAVVLTG (415 aa)) folds into the Ketosynthase family 3 (KS3) domain. Active-site for beta-ketoacyl synthase activity residues include Cys169, His309, and His346.

The protein belongs to the thiolase-like superfamily. Beta-ketoacyl-ACP synthases family.

Involved in developmentally regulated synthesis of a compound biosynthetically related to polyketide antibiotics which is essential for spore color in Streptomyces halstedii. This chain is Putative polyketide beta-ketoacyl synthase 1 (sch1), found in Streptomyces halstedii.